The chain runs to 156 residues: Oxidized purine nucleoside triphosphate hydrolase (156 aa).

A Nudix hydrolase domain is found at 3–132 (TSKLLTLVLV…WFPLMLQKKR (130 aa)). 2-oxo-dATP is bound at residue Thr8. O(6)-methyl-dGMP contacts are provided by residues Thr8, Lys23, Asn33, and 35–38 (FGGK). Position 23 (Lys23) interacts with 8-oxo-dGTP. Residues Asn33 and 35–38 (FGGK) each bind 2-oxo-dATP. Positions 36, 52, 55, 56, and 100 each coordinate Mg(2+). The Nudix box motif lies at 37–58 (GKVQTGETIEQAARRELLEESG). Residue 117-120 (WADD) participates in 2-oxo-dATP binding. 117-120 (WADD) provides a ligand contact to O(6)-methyl-dGMP.

The protein belongs to the Nudix hydrolase family. As to quaternary structure, monomer. It depends on Mg(2+) as a cofactor.

The protein resides in the cytoplasm. Its subcellular location is the cytosol. It is found in the mitochondrion matrix. It localises to the nucleus. The catalysed reaction is 2-oxo-dATP + H2O = 2-oxo-dAMP + diphosphate + H(+). It catalyses the reaction 2-oxo-ATP + H2O = 2-oxo-AMP + diphosphate + H(+). The enzyme catalyses 8-oxo-dGTP + H2O = 8-oxo-dGMP + diphosphate + H(+). It carries out the reaction 8-oxo-dATP + H2O = 8-oxo-dAMP + diphosphate + H(+). The catalysed reaction is O(6)-methyl-dGTP + H2O = O(6)-methyl-dGMP + diphosphate + H(+). It catalyses the reaction N(6)-methyl-dATP + H2O = N(6)-methyl-dAMP + diphosphate + H(+). The enzyme catalyses N(6)-methyl-ATP + H2O = N(6)-methyl-AMP + diphosphate + H(+). With respect to regulation, inhibited by TH588. Its function is as follows. Oxidized purine nucleoside triphosphate hydrolase which is a prominent sanitizer of the oxidized nucleotide pool. Catalyzes the hydrolysis of 2-oxo-dATP (2-hydroxy-dATP) into 2-oxo-dAMP. Also has a significant hydrolase activity toward 2-oxo-ATP, 8-oxo-dGTP and 8-oxo-dATP. Through the hydrolysis of oxidized purine nucleoside triphosphates, prevents their incorporation into DNA and the subsequent transversions A:T to C:G and G:C to T:A. Also catalyzes the hydrolysis of methylated purine nucleoside triphosphate preventing their integration into DNA. Through this antimutagenic activity protects cells from oxidative stress. The sequence is that of Oxidized purine nucleoside triphosphate hydrolase (nudt1) from Danio rerio (Zebrafish).